The primary structure comprises 175 residues: Ribosome maturation factor RimM (175 aa).

Residues 103 to 175 (EGEYYWSDLI…LLTVDWDPDF (73 aa)) enclose the PRC barrel domain.

This sequence belongs to the RimM family. As to quaternary structure, binds ribosomal protein uS19.

It is found in the cytoplasm. Its function is as follows. An accessory protein needed during the final step in the assembly of 30S ribosomal subunit, possibly for assembly of the head region. Essential for efficient processing of 16S rRNA. May be needed both before and after RbfA during the maturation of 16S rRNA. It has affinity for free ribosomal 30S subunits but not for 70S ribosomes. This chain is Ribosome maturation factor RimM, found in Nitrosococcus oceani (strain ATCC 19707 / BCRC 17464 / JCM 30415 / NCIMB 11848 / C-107).